Consider the following 211-residue polypeptide: FMN-dependent NADH:quinone oxidoreductase 3 (211 aa).

102–105 (MWNF) is an FMN binding site.

This sequence belongs to the azoreductase type 1 family. As to quaternary structure, homodimer. It depends on FMN as a cofactor.

The catalysed reaction is 2 a quinone + NADH + H(+) = 2 a 1,4-benzosemiquinone + NAD(+). The enzyme catalyses N,N-dimethyl-1,4-phenylenediamine + anthranilate + 2 NAD(+) = 2-(4-dimethylaminophenyl)diazenylbenzoate + 2 NADH + 2 H(+). Functionally, quinone reductase that provides resistance to thiol-specific stress caused by electrophilic quinones. In terms of biological role, also exhibits azoreductase activity. Catalyzes the reductive cleavage of the azo bond in aromatic azo compounds to the corresponding amines. The protein is FMN-dependent NADH:quinone oxidoreductase 3 of Bacillus cereus (strain ATCC 10987 / NRS 248).